A 233-amino-acid polypeptide reads, in one-letter code: Small ribosomal subunit protein uS2 (233 aa).

It belongs to the universal ribosomal protein uS2 family.

This is Small ribosomal subunit protein uS2 from Bacillus cytotoxicus (strain DSM 22905 / CIP 110041 / 391-98 / NVH 391-98).